Here is a 190-residue protein sequence, read N- to C-terminus: Lipid A acyltransferase PagP (190 aa).

A signal peptide spans 1 to 29 (MYVAMIIRKYFLIIALLLMPWLAIPSVSA). Active-site residues include H62, D105, and S106.

The protein belongs to the lipid A palmitoyltransferase family. As to quaternary structure, homodimer.

It is found in the cell outer membrane. The catalysed reaction is a lipid A + a 1,2-diacyl-sn-glycero-3-phosphocholine = a hepta-acyl lipid A + a 2-acyl-sn-glycero-3-phosphocholine. It carries out the reaction a lipid IVA + a 1,2-diacyl-sn-glycero-3-phosphocholine = a lipid IVB + a 2-acyl-sn-glycero-3-phosphocholine. It catalyses the reaction a lipid IIA + a 1,2-diacyl-sn-glycero-3-phosphocholine = a lipid IIB + a 2-acyl-sn-glycero-3-phosphocholine. Its function is as follows. Transfers a fatty acid residue from the sn-1 position of a phospholipid to the N-linked hydroxyfatty acid chain on the proximal unit of lipid A or its precursors. Required for resistance to cationic antimicrobial peptides (CAMPs). Modifications of lipid A with an acyl chain allow to evade host immune defenses by resisting antimicrobial peptides and attenuating the inflammatory response to infection triggered by lipopolysaccharide through the Toll-like receptor 4 (TLR4) signal transduction pathway. The protein is Lipid A acyltransferase PagP of Salmonella typhimurium (strain LT2 / SGSC1412 / ATCC 700720).